A 176-amino-acid polypeptide reads, in one-letter code: Inorganic pyrophosphatase (176 aa).

The substrate site is built by Lys30, Arg44, and Tyr56. Mg(2+) is bound by residues Asp66, Asp71, and Asp103. Tyr142 contacts substrate.

This sequence belongs to the PPase family. In terms of assembly, homohexamer. Mg(2+) serves as cofactor.

Its subcellular location is the cytoplasm. The enzyme catalyses diphosphate + H2O = 2 phosphate + H(+). Catalyzes the hydrolysis of inorganic pyrophosphate (PPi) forming two phosphate ions. This is Inorganic pyrophosphatase from Escherichia coli O6:H1 (strain CFT073 / ATCC 700928 / UPEC).